The sequence spans 361 residues: MSGAGKRVVVGMSGGVDSSVTAWLLKQQGYEVIGLFMKNWEDDDDSEYCSTRQDWLDVVSVADLIGVDVEAVNFAAEYKDRVFADFLREYSAGRTPNPDVLCNAEIKFKAFLDHAMSLGAETIATGHYARVRQNAAGRFELLKALDHTKDQSYFLHRLNQAQLSRTLFPLGEIPKTRVREIAAEIGLPNAKKKDSTGICFIGERPFRDFLNRYLPTKPGPMKTPEGKVVGEHIGLAFYTLGQRKGIGLGGSREGNGDAWYVARKDMANNTLYVVQGHDHPWLLTPVLTASDLSWVAGEPPAAGAAMAAKTRYRQSDAACTVQAVDGDALTLRFAEAQWAVTPGQSAVLYDGDICLGGGIIQ.

ATP-binding positions include 11 to 18 and Met37; that span reads GMSGGVDS. Residues 97-99 are interaction with target base in tRNA; it reads NPD. The active-site Nucleophile is the Cys102. Cysteines 102 and 199 form a disulfide. Gly126 contacts ATP. The segment at 149-151 is interaction with tRNA; sequence KDQ. The active-site Cysteine persulfide intermediate is Cys199. The tract at residues 311-312 is interaction with tRNA; sequence RY.

The protein belongs to the MnmA/TRMU family.

It is found in the cytoplasm. The catalysed reaction is S-sulfanyl-L-cysteinyl-[protein] + uridine(34) in tRNA + AH2 + ATP = 2-thiouridine(34) in tRNA + L-cysteinyl-[protein] + A + AMP + diphosphate + H(+). Catalyzes the 2-thiolation of uridine at the wobble position (U34) of tRNA, leading to the formation of s(2)U34. This Cupriavidus necator (strain ATCC 17699 / DSM 428 / KCTC 22496 / NCIMB 10442 / H16 / Stanier 337) (Ralstonia eutropha) protein is tRNA-specific 2-thiouridylase MnmA.